The chain runs to 177 residues: O-acetyl-ADP-ribose deacetylase (177 aa).

In terms of domain architecture, Macro spans 1–175 (MKTRIHVVQG…LYERLLTQQG (175 aa)). Residues 11–12 (DI), Asn25, 33–35 (GVD), and 122–126 (STGVY) contribute to the substrate site. Asp35 functions as the Proton acceptor in the catalytic mechanism.

This sequence belongs to the MacroD-type family. YmdB subfamily. As to quaternary structure, homodimer. Interacts with RNase III.

The enzyme catalyses 3''-O-acetyl-ADP-D-ribose + H2O = ADP-D-ribose + acetate + H(+). It catalyses the reaction 2''-O-acetyl-ADP-D-ribose + H2O = ADP-D-ribose + acetate + H(+). Functionally, deacetylates O-acetyl-ADP ribose to yield ADP-ribose and free acetate. Down-regulates ribonuclease 3 (RNase III) activity. Acts by interacting directly with the region of the ribonuclease that is required for dimerization/activation. This chain is O-acetyl-ADP-ribose deacetylase, found in Shigella flexneri serotype 5b (strain 8401).